The sequence spans 1181 residues: WD repeat-containing protein 35 (1181 aa).

WD repeat units follow at residues 4-43, 61-100, 105-143, 147-185, 193-241, and 246-288; these read YLSKKISIPNNVKLQCVSWNKEQGFIACGGEDGLLKVLKL, LSMNQTLEGHSGSVQVVTWNEQYQKLTTSDENGLIIVWML, WIEEMINNRNKSVVRSMSWNADGQKICIVYEDGAVIVGS, NRIWGKDLKGIQLSHVTWSADSKVLLFGMANGEIHIYDN, MKLS…IMRH, and NPVL…IVQF.

In terms of assembly, component of the IFT complex A (IFT-A) complex. IFT-A complex is divided into a core subcomplex composed of IFT122:IFT140:WDR19 which is associated with TULP3 and a peripheral subcomplex composed of IFT43:WDR35:TTC21B. Interacts directy with IFT122, ITF43 and TTC21B. Interacts with IFT43. Interacts with CFAP61.

It is found in the cytoplasm. The protein localises to the cytoskeleton. The protein resides in the microtubule organizing center. It localises to the centrosome. Its subcellular location is the cilium axoneme. It is found in the cilium basal body. In terms of biological role, as a component of the IFT complex A (IFT-A), a complex required for retrograde ciliary transport and entry into cilia of G protein-coupled receptors (GPCRs), it is involved in ciliogenesis and ciliary protein trafficking. May promote CASP3 activation and TNF-stimulated apoptosis. The sequence is that of WD repeat-containing protein 35 from Homo sapiens (Human).